The sequence spans 553 residues: Formate--tetrahydrofolate ligase 2 (553 aa).

Position 63-70 (63-70 (TSAGEGKS)) interacts with ATP.

This sequence belongs to the formate--tetrahydrofolate ligase family.

The enzyme catalyses (6S)-5,6,7,8-tetrahydrofolate + formate + ATP = (6R)-10-formyltetrahydrofolate + ADP + phosphate. It functions in the pathway one-carbon metabolism; tetrahydrofolate interconversion. The sequence is that of Formate--tetrahydrofolate ligase 2 from Lactobacillus acidophilus (strain ATCC 700396 / NCK56 / N2 / NCFM).